Reading from the N-terminus, the 97-residue chain is Large ribosomal subunit protein bL28 (97 aa).

The protein belongs to the bacterial ribosomal protein bL28 family.

This is Large ribosomal subunit protein bL28 from Sphingopyxis alaskensis (strain DSM 13593 / LMG 18877 / RB2256) (Sphingomonas alaskensis).